A 397-amino-acid polypeptide reads, in one-letter code: Teichoic acid D-alanine hydrolase (397 aa).

An N-terminal signal peptide occupies residues 1 to 27 (MKFNKEKLVIHACVLLFIIISIGLVFH).

The protein localises to the cell membrane. The catalysed reaction is [(4-D-Ala)-(2-GlcNAc)-Rib-ol-P]n-[Gro-P]m-beta-D-ManNAc-(1-&gt;4)-alpha-D-GlcNAc-P-peptidoglycan + n H2O = [(2-GlcNAc)-Rib-ol-P]n-[Gro-P]m-beta-D-ManNAc-(1-&gt;4)-alpha-D-GlcNAc-P-peptidoglycan + n D-alanine.. Its function is as follows. Catalyzes the liberation of D-alanyl moieties present on wall teichoic acid (WTA) and lipoteichoic acid (LTA). Affects the methicillin resistance level and autolysis in the presence of Triton X-100 as well as the cell wall structure. In Staphylococcus aureus (strain MRSA252), this protein is Teichoic acid D-alanine hydrolase (fmtA).